Here is a 270-residue protein sequence, read N- to C-terminus: tRNA pseudouridine synthase A (270 aa).

Catalysis depends on Asp52, which acts as the Nucleophile. Substrate is bound at residue Tyr110. The tract at residues 251 to 270 (TGAADEPAAPHGVTETRMQL) is disordered.

Belongs to the tRNA pseudouridine synthase TruA family. In terms of assembly, homodimer.

The catalysed reaction is uridine(38/39/40) in tRNA = pseudouridine(38/39/40) in tRNA. In terms of biological role, formation of pseudouridine at positions 38, 39 and 40 in the anticodon stem and loop of transfer RNAs. The chain is tRNA pseudouridine synthase A from Roseiflexus sp. (strain RS-1).